The sequence spans 1101 residues: Type II inositol polyphosphate 5-phosphatase 15 (1101 aa).

The span at Arg-31–Ser-40 shows a compositional bias: low complexity. The interval Arg-31–Lys-54 is disordered. WD repeat units lie at residues Leu-121–Arg-162, Phe-180–Glu-219, Ala-225–Leu-263, Asp-403–Asp-432, Gly-433–Val-481, and His-483–Asn-519. Catalytic stretches follow at residues Asp-749 to Thr-765 and Lys-828 to Asn-843. Lys-907 participates in a covalent cross-link: Glycyl lysine isopeptide (Lys-Gly) (interchain with G-Cter in ubiquitin).

This sequence belongs to the inositol polyphosphate 5-phosphatase family. The cofactor is Mg(2+). Predominantly expressed in interfascicular fibers and vascular bundles. Expressed in seedlings, stems, roots and flowers. Expressed at lower level in mature leaves.

The enzyme catalyses a 1,2-diacyl-sn-glycero-3-phospho-(1D-myo-inositol-4,5-bisphosphate) + H2O = a 1,2-diacyl-sn-glycero-3-phospho-(1D-myo-inositol 4-phosphate) + phosphate. It catalyses the reaction a 1,2-diacyl-sn-glycero-3-phospho-(1D-myo-inositol-3,4,5-trisphosphate) + H2O = a 1,2-diacyl-sn-glycero-3-phospho-(1D-myo-inositol-3,4-bisphosphate) + phosphate. It carries out the reaction 1D-myo-inositol 1,4,5-trisphosphate + H2O = 1D-myo-inositol 1,4-bisphosphate + phosphate. In terms of biological role, has phosphatase activity toward PtdIns(4,5)P2, PtdIns(3,4,5)P3 and Ins(1,4,5)P3. Has a higher substrate affinity toward PtdIns(4,5)P2. Required for secondary wall synthesis and actin organization in fiber cells. The polypeptide is Type II inositol polyphosphate 5-phosphatase 15 (Arabidopsis thaliana (Mouse-ear cress)).